Reading from the N-terminus, the 34-residue chain is Dermaseptin-S2 (34 aa).

Belongs to the frog skin active peptide (FSAP) family. Dermaseptin subfamily. In terms of tissue distribution, expressed by the skin glands.

The protein resides in the secreted. Functionally, potent antimicrobial peptide with activity against bacteria and protozoa. Also has activity against fungi. Probably acts by disturbing membrane functions with its amphipathic structure. This is Dermaseptin-S2 from Phyllomedusa sauvagei (Sauvage's leaf frog).